A 797-amino-acid polypeptide reads, in one-letter code: Xaa-Pro dipeptidyl-peptidase (797 aa).

Residues serine 370, aspartate 490, and histidine 521 each act as charge relay system in the active site.

It belongs to the peptidase S15 family. Homodimer.

The protein localises to the cytoplasm. It carries out the reaction Hydrolyzes Xaa-Pro-|- bonds to release unblocked, N-terminal dipeptides from substrates including Ala-Pro-|-p-nitroanilide and (sequentially) Tyr-Pro-|-Phe-Pro-|-Gly-Pro-|-Ile.. Its function is as follows. Removes N-terminal dipeptides sequentially from polypeptides having unsubstituted N-termini provided that the penultimate residue is proline. This chain is Xaa-Pro dipeptidyl-peptidase, found in Lacticaseibacillus paracasei (strain ATCC 334 / BCRC 17002 / CCUG 31169 / CIP 107868 / KCTC 3260 / NRRL B-441) (Lactobacillus paracasei).